Here is a 135-residue protein sequence, read N- to C-terminus: NAD(P)H-quinone oxidoreductase subunit 3 (135 aa).

The next 3 helical transmembrane spans lie at leucine 15–valine 35, methionine 79–valine 99, and leucine 104–alanine 124.

The protein belongs to the complex I subunit 3 family. NDH-1 can be composed of about 15 different subunits; different subcomplexes with different compositions have been identified which probably have different functions.

The protein resides in the cellular thylakoid membrane. The catalysed reaction is a plastoquinone + NADH + (n+1) H(+)(in) = a plastoquinol + NAD(+) + n H(+)(out). The enzyme catalyses a plastoquinone + NADPH + (n+1) H(+)(in) = a plastoquinol + NADP(+) + n H(+)(out). Functionally, NDH-1 shuttles electrons from an unknown electron donor, via FMN and iron-sulfur (Fe-S) centers, to quinones in the respiratory and/or the photosynthetic chain. The immediate electron acceptor for the enzyme in this species is believed to be plastoquinone. Couples the redox reaction to proton translocation, and thus conserves the redox energy in a proton gradient. Cyanobacterial NDH-1 also plays a role in inorganic carbon-concentration. This Synechococcus sp. (strain CC9311) protein is NAD(P)H-quinone oxidoreductase subunit 3.